The sequence spans 123 residues: MARIGGVNVPVDKRVVVALTYIYGIGTSLANRICEGCGIDKNVRVSALSEEDVVKIRNFIRAGCVVEADLRKEVAMNIKFLMDIGCYRGLRHRKKLPVRGQRTHTNARTRKGGSRLAVAAKKK.

The segment covering 99–113 (RGQRTHTNARTRKGG) has biased composition (basic residues). A disordered region spans residues 99 to 123 (RGQRTHTNARTRKGGSRLAVAAKKK).

This sequence belongs to the universal ribosomal protein uS13 family. Part of the 30S ribosomal subunit. Forms a loose heterodimer with protein S19. Forms two bridges to the 50S subunit in the 70S ribosome.

Its function is as follows. Located at the top of the head of the 30S subunit, it contacts several helices of the 16S rRNA. In the 70S ribosome it contacts the 23S rRNA (bridge B1a) and protein L5 of the 50S subunit (bridge B1b), connecting the 2 subunits; these bridges are implicated in subunit movement. Contacts the tRNAs in the A and P-sites. The chain is Small ribosomal subunit protein uS13 from Anaplasma phagocytophilum (strain HZ).